The following is a 202-amino-acid chain: Probable 1-Cys peroxiredoxin (202 aa).

The Thioredoxin domain occupies 1–148 (STHGKIRIHD…VVRAVDSLLT (148 aa)). The Cysteine sulfenic acid (-SOH) intermediate role is filled by cysteine 30. A Bipartite nuclear localization signal motif is present at residues 178 to 201 (KKLFPQGFETKDLPSKKGYLRFTK).

The protein belongs to the peroxiredoxin family. Prx6 subfamily. In terms of tissue distribution, embryos.

The protein localises to the nucleus. It is found in the cytoplasm. It catalyses the reaction a hydroperoxide + [thioredoxin]-dithiol = an alcohol + [thioredoxin]-disulfide + H2O. Its function is as follows. Thiol-specific peroxidase that catalyzes the reduction of hydrogen peroxide and organic hydroperoxides to water and alcohols, respectively. Seems to contribute to the inhibition of germination during stress. The chain is Probable 1-Cys peroxiredoxin from Bromus secalinus (Rye brome).